Here is a 286-residue protein sequence, read N- to C-terminus: MVAVIIKGNEVAEKKRAQLTEEVVKLKEQGIVPGLAVILVGEDPASRSYVKGKEKGCEQVGIYSELIELPETITEERLLAEIDRLNGDDRINGILVQLPLPKHIEEKAIIERISPEKDVDGFHPISVGRMMTGQDTFLPCTPHGIVELVKETNLDISGKHVVVIGRSNIVGKPVGQLFLNENATVTYCHSKTQNMKELSKLADILIVAVGRPKMITADYIKEGAVVIDVGVNRLETGKLCGDVDFDNVLDVAGYITPVPKGVGPMTITMLLHNTVESAKRAGVVCK.

Residues 165–167 (GRS), serine 190, and valine 231 contribute to the NADP(+) site.

This sequence belongs to the tetrahydrofolate dehydrogenase/cyclohydrolase family. Homodimer.

It carries out the reaction (6R)-5,10-methylene-5,6,7,8-tetrahydrofolate + NADP(+) = (6R)-5,10-methenyltetrahydrofolate + NADPH. The enzyme catalyses (6R)-5,10-methenyltetrahydrofolate + H2O = (6R)-10-formyltetrahydrofolate + H(+). Its pathway is one-carbon metabolism; tetrahydrofolate interconversion. In terms of biological role, catalyzes the oxidation of 5,10-methylenetetrahydrofolate to 5,10-methenyltetrahydrofolate and then the hydrolysis of 5,10-methenyltetrahydrofolate to 10-formyltetrahydrofolate. The chain is Bifunctional protein FolD from Bacillus cereus (strain ATCC 14579 / DSM 31 / CCUG 7414 / JCM 2152 / NBRC 15305 / NCIMB 9373 / NCTC 2599 / NRRL B-3711).